A 196-amino-acid polypeptide reads, in one-letter code: Imidazoleglycerol-phosphate dehydratase (196 aa).

It belongs to the imidazoleglycerol-phosphate dehydratase family.

The protein localises to the cytoplasm. It carries out the reaction D-erythro-1-(imidazol-4-yl)glycerol 3-phosphate = 3-(imidazol-4-yl)-2-oxopropyl phosphate + H2O. The protein operates within amino-acid biosynthesis; L-histidine biosynthesis; L-histidine from 5-phospho-alpha-D-ribose 1-diphosphate: step 6/9. The polypeptide is Imidazoleglycerol-phosphate dehydratase (Desulfitobacterium hafniense (strain Y51)).